A 601-amino-acid polypeptide reads, in one-letter code: Proteasome-associated ATPase (601 aa).

The segment covering 1-15 (MSGPRSGSGSGGSTG) has biased composition (gly residues). The segment at 1-29 (MSGPRSGSGSGGSTGRPGDADSQRSAYEK) is disordered. The segment covering 18–29 (GDADSQRSAYEK) has biased composition (basic and acidic residues). Residues 19 to 106 (DADSQRSAYE…LKEEVDRLAQ (88 aa)) are a coiled coil. 289 to 294 (GCGKTL) lines the ATP pocket. The tract at residues 600 to 601 (YL) is docks into pockets in the proteasome alpha-ring.

This sequence belongs to the AAA ATPase family. Homohexamer. Assembles into a hexameric ring structure that caps the 20S proteasome core. Strongly interacts with the prokaryotic ubiquitin-like protein Pup through a hydrophobic interface; the interacting region of ARC lies in its N-terminal coiled-coil domain. There is one Pup binding site per ARC hexamer ring. Upon ATP-binding, the C-terminus of ARC interacts with the alpha-rings of the proteasome core, possibly by binding to the intersubunit pockets.

It participates in protein degradation; proteasomal Pup-dependent pathway. Its function is as follows. ATPase which is responsible for recognizing, binding, unfolding and translocation of pupylated proteins into the bacterial 20S proteasome core particle. May be essential for opening the gate of the 20S proteasome via an interaction with its C-terminus, thereby allowing substrate entry and access to the site of proteolysis. Thus, the C-termini of the proteasomal ATPase may function like a 'key in a lock' to induce gate opening and therefore regulate proteolysis. The protein is Proteasome-associated ATPase of Parafrankia sp. (strain EAN1pec).